The sequence spans 569 residues: Acyl-CoA transferase FVEG_12629 (569 aa).

It belongs to the CoA-transferase III family.

Acyl-CoA transferase; part of the Fusarium detoxification of benzoxazolinone cluster 2 (FDB2) involved in the degradation of benzoxazolinones produced by the host plant. Maize, wheat, and rye produce the 2 benzoxazinone phytoanticipins 2,4-dihy-droxy-7-methoxy-1,4-benzoxazin-3-one (DIMBOA) and 2,4-dihydroxy-1,4-benzoxazin-3-one (DIBOA) that, due to their inherent instability once released, spontaneously degrade to the more stable corresponding benzoxazolinones, 6-methoxy-2-benzoxazolinone (MBOA) and 2-benzoxazolinone (BOA), respectively. The first step in the detoxification of benzoxazolinones involves the hydrolysis of the cyclic ester bond of benzoxazolinones by the FDB1 cluster gamma-lactamase MBL1 to aminophenols. MBL1 is able to convert BOA into 2-aminophenol (2-AP), as well as MBOA into 5-methoxy-2-aminophenol (2-AMP). The FDB2 cluster N-malonyltransferase FDB2/NAT1 then metabolizes aminophenols via N-malonylation to non-toxic malonamic acids. FDB2/NAT1 converts 2-AP into N-(2-hydroxyphenyl) malonamic acid (HPMA) and 2-AMP into N-(2-hydroxy-4-methoxyphenyl) malonamic acid (HMPMA). The duplicated dienlactone hydrolases DLH1 and DLH2 may provide redundant function for hydrolyzing the lactone moiety in the BOA molecule. The roles of the amidases an other enzymes encoded by the 2 FDB clusters have not been identified so far. This chain is Acyl-CoA transferase FVEG_12629, found in Gibberella moniliformis (strain M3125 / FGSC 7600) (Maize ear and stalk rot fungus).